A 579-amino-acid polypeptide reads, in one-letter code: Type II restriction enzyme FokI (579 aa).

Active-site residues include Asp450, Asp467, and Lys469.

In terms of assembly, monomer, in which form it can cleave DNA. Homodimer when bound to DNA. It depends on Mg(2+) as a cofactor.

The catalysed reaction is Endonucleolytic cleavage of DNA to give specific double-stranded fragments with terminal 5'-phosphates.. In terms of biological role, an S subtype restriction enzyme that recognizes the asymmetric double-stranded sequence 5'-GGATG-3' and cleaves respectively 14 bases after G-1 (top strand) and 13 bases before C-1 (bottom strand). In Planomicrobium okeanokoites (Planococcus okeanokoites), this protein is Type II restriction enzyme FokI.